The following is a 182-amino-acid chain: UPF0690 protein C1orf52 homolog (182 aa).

The segment at 1–61 is disordered; sequence MAAEEKDPLS…AEKRLPGPDE (61 aa). Residues 23 to 32 are compositionally biased toward acidic residues; the sequence is SDEEDNSEPE. Residues 51–61 are compositionally biased toward basic and acidic residues; the sequence is KAEKRLPGPDE. Phosphothreonine is present on Thr67. A Phosphotyrosine modification is found at Tyr132. The interval 132–182 is disordered; the sequence is YEDNGDDAPQNAKKARLLPEGEETVESDDEKDEHTSKKRKIELGEPTKKKK. The span at 151-162 shows a compositional bias: acidic residues; sequence EGEETVESDDEK. Ser158 carries the phosphoserine modification. Basic and acidic residues predominate over residues 172–182; that stretch reads IELGEPTKKKK.

It belongs to the UPF0690 family.

The polypeptide is UPF0690 protein C1orf52 homolog (Bos taurus (Bovine)).